We begin with the raw amino-acid sequence, 137 residues long: uncharacterized protein (137 aa).

A helical membrane pass occupies residues 75-91; that stretch reads MFLDAMVILAVASGVSL. Residues 93-116 are disordered; the sequence is PQLPGRRSHNASTPGAKKPGKDHG.

The protein localises to the membrane. This is an uncharacterized protein from Saccharomyces cerevisiae (strain ATCC 204508 / S288c) (Baker's yeast).